The sequence spans 130 residues: Fluoride-specific ion channel FluC (130 aa).

4 helical membrane passes run 9–29, 39–59, 71–91, and 104–124; these read LAII…TIFL, YATF…VTLA, LLLA…ALEV, and VLYG…GSLI. Residues Gly79 and Thr82 each coordinate Na(+).

This sequence belongs to the fluoride channel Fluc/FEX (TC 1.A.43) family.

It localises to the cell inner membrane. It carries out the reaction fluoride(in) = fluoride(out). Its activity is regulated as follows. Na(+) is not transported, but it plays an essential structural role and its presence is essential for fluoride channel function. Fluoride-specific ion channel. Important for reducing fluoride concentration in the cell, thus reducing its toxicity. The polypeptide is Fluoride-specific ion channel FluC (Synechocystis sp. (strain ATCC 27184 / PCC 6803 / Kazusa)).